The sequence spans 352 residues: Ferrochelatase (352 aa).

Fe cation is bound by residues His-222 and Glu-303.

It belongs to the ferrochelatase family.

It is found in the cytoplasm. The enzyme catalyses heme b + 2 H(+) = protoporphyrin IX + Fe(2+). The protein operates within porphyrin-containing compound metabolism; protoheme biosynthesis; protoheme from protoporphyrin-IX: step 1/1. In terms of biological role, catalyzes the ferrous insertion into protoporphyrin IX. In Brucella canis (strain ATCC 23365 / NCTC 10854 / RM-666), this protein is Ferrochelatase.